Reading from the N-terminus, the 176-residue chain is NAD(P)H-quinone oxidoreductase subunit I, chloroplastic (176 aa).

2 4Fe-4S ferredoxin-type domains span residues 55-84 (GRIH…VDWE) and 95-124 (LNYS…MTEE). 8 residues coordinate [4Fe-4S] cluster: Cys64, Cys67, Cys70, Cys74, Cys104, Cys107, Cys110, and Cys114.

It belongs to the complex I 23 kDa subunit family. As to quaternary structure, NDH is composed of at least 16 different subunits, 5 of which are encoded in the nucleus. Requires [4Fe-4S] cluster as cofactor.

Its subcellular location is the plastid. It localises to the chloroplast thylakoid membrane. It catalyses the reaction a plastoquinone + NADH + (n+1) H(+)(in) = a plastoquinol + NAD(+) + n H(+)(out). The catalysed reaction is a plastoquinone + NADPH + (n+1) H(+)(in) = a plastoquinol + NADP(+) + n H(+)(out). In terms of biological role, NDH shuttles electrons from NAD(P)H:plastoquinone, via FMN and iron-sulfur (Fe-S) centers, to quinones in the photosynthetic chain and possibly in a chloroplast respiratory chain. The immediate electron acceptor for the enzyme in this species is believed to be plastoquinone. Couples the redox reaction to proton translocation, and thus conserves the redox energy in a proton gradient. This chain is NAD(P)H-quinone oxidoreductase subunit I, chloroplastic, found in Populus trichocarpa (Western balsam poplar).